The chain runs to 115 residues: Non-specific lipid-transfer protein (115 aa).

The signal sequence occupies residues 1–24 (MASSAVIKLALVVALCMAVSVAHA). 4 disulfides stabilise this stretch: cysteine 27/cysteine 74, cysteine 37/cysteine 51, cysteine 52/cysteine 97, and cysteine 72/cysteine 111.

Belongs to the plant LTP family.

Functionally, plant non-specific lipid-transfer proteins transfer phospholipids as well as galactolipids across membranes. May play a role in wax or cutin deposition in the cell walls of expanding epidermal cells and certain secretory tissues. The sequence is that of Non-specific lipid-transfer protein from Pyrus communis (Pear).